A 136-amino-acid chain; its full sequence is Large ribosomal subunit protein uL16 (136 aa).

It belongs to the universal ribosomal protein uL16 family. In terms of assembly, part of the 50S ribosomal subunit.

Binds 23S rRNA and is also seen to make contacts with the A and possibly P site tRNAs. This is Large ribosomal subunit protein uL16 from Elusimicrobium minutum (strain Pei191).